The primary structure comprises 116 residues: U16-barytoxin-Tl1d (116 aa).

Positions 1–20 (MKTIIVFLSLLVLATKFGDA) are cleaved as a signal peptide. Residues 21–74 (NEGVNQEQMKEVIQNEFREDFLNEMAAMSLLQQLEAIESTLLEKEADRNSRQKR) constitute a propeptide that is removed on maturation. 3 cysteine pairs are disulfide-bonded: Cys-75–Cys-90, Cys-82–Cys-95, and Cys-89–Cys-110.

The protein belongs to the neurotoxin 14 (magi-1) family. 06 (ICK-Trit) subfamily. In terms of tissue distribution, expressed by the venom gland.

It is found in the secreted. In terms of biological role, ion channel inhibitor. This chain is U16-barytoxin-Tl1d, found in Trittame loki (Brush-footed trapdoor spider).